The chain runs to 165 residues: GTPase activating protein 1 (165 aa).

In terms of domain architecture, C2 spans 1–105; sequence MLGHLVGLVK…VVKMKIEGVA (105 aa). Ca(2+)-binding residues include Arg-22, Asp-23, Asp-28, Asp-74, Lys-75, Asp-76, and Asp-81.

This sequence belongs to the plant CAR protein family. In terms of assembly, binds to PYR/PYL/RCAR abscisic acid intracellular receptors in an ABA-independent manner, both at the plasma membrane and in the nucleus. Binds phospholipids in a Ca(2+)-dependent manner. Interacts with YchF1.

The protein localises to the cell membrane. Its subcellular location is the nucleus. It localises to the cytoplasm. It is found in the cytosol. Functionally, mediates the transient calcium-dependent interaction of PYR/PYL/RCAR abscisic acid (ABA) receptors with the plasma membrane and thus regulates ABA sensitivity. Stimulates the GTPase/ATPase activities of YchF1, and regulates its subcellular localization. Promotes tolerance towards salinity stress by limiting the accumulation of reactive oxygen species (ROS). Promotes resistance to bacterial pathogens. The chain is GTPase activating protein 1 from Oryza sativa subsp. indica (Rice).